Here is a 429-residue protein sequence, read N- to C-terminus: Ubiquinone hydroxylase UbiL (429 aa).

Positions 1-22 (MSEPLLRGLAAGDPPSATGPVT) are disordered.

This sequence belongs to the UbiH/COQ6 family. Requires FAD as cofactor.

It carries out the reaction a 2-(all-trans-polyprenyl)phenol + NADPH + O2 + H(+) = a 3-(all-trans-polyprenyl)benzene-1,2-diol + NADP(+) + H2O. It participates in cofactor biosynthesis; ubiquinone biosynthesis. Its function is as follows. Catalyzes the hydroxylation of two positions of the aromatic ring during ubiquinone biosynthesis. This is Ubiquinone hydroxylase UbiL from Rhodospirillum rubrum (strain ATCC 11170 / ATH 1.1.1 / DSM 467 / LMG 4362 / NCIMB 8255 / S1).